The following is a 157-amino-acid chain: MFEWNKYFPFHNQFSKEALKKADPKEVETYVNRVMESVFGSDYAAQFPFRDPLPQKEHPAKPDAKPDVKPDIDIFETADHVFVKVPISEEWLEQVRIKHTSHELWLENLPRADHPKKVNLPCLVKRKGTKAVYKDGLLEVMFQKQQDYNMSEVEIIR.

It is found in the spore coat. In terms of biological role, involved in spore germination; probably required at the earliest stage of germination. In Bacillus subtilis (strain 168), this protein is Spore germination protein GerT (gerT).